The primary structure comprises 270 residues: MKNNKPICFYDIYCFKPQECFKRNDINLLEDKLKRYSKITFLRNKENPEIIFLLGGDGSFINFINQQWKKNVKIVGINYGQLGFYSSYDSIKTINLDEIIDENMYYNPLLLKVSINNQNFFYCLNELSLFSNELVSFDISINDYPYEKFRGSGLLFVTPSGSTGKNKTAFGPIIFNNHENFIMTEIFPVNHLKYSSLNAPVVFRKDYKISLTNIKFKKSFSVAIDGNIINFSDKINDIKVETIQASSKIHGLNNFKKYIDKLNKSFIKGE.

The Proton acceptor role is filled by aspartate 57. NAD(+) contacts are provided by residues 57–58 (DG), 125–126 (NE), arginine 150, and asparagine 227.

It belongs to the NAD kinase family. The cofactor is a divalent metal cation.

It is found in the cytoplasm. It catalyses the reaction NAD(+) + ATP = ADP + NADP(+) + H(+). Involved in the regulation of the intracellular balance of NAD and NADP, and is a key enzyme in the biosynthesis of NADP. Catalyzes specifically the phosphorylation on 2'-hydroxyl of the adenosine moiety of NAD to yield NADP. The chain is NAD kinase from Ureaplasma parvum serovar 3 (strain ATCC 700970).